Consider the following 209-residue polypeptide: Prolactin (209 aa).

Residues 1–24 (MAQRFKGRSLFLTALLCLASQGYA) form the signal peptide. Intrachain disulfides connect cysteine 70-cysteine 184 and cysteine 201-cysteine 209.

This sequence belongs to the somatotropin/prolactin family.

The protein localises to the secreted. In Anguilla anguilla (European freshwater eel), this protein is Prolactin (prl).